Here is a 463-residue protein sequence, read N- to C-terminus: Glycine--tRNA ligase (463 aa).

Substrate is bound by residues arginine 98 and glutamate 174. Residues 206-208 (RNE), 216-221 (FRTREF), 290-291 (EL), and 334-337 (GADR) contribute to the ATP site. 221-225 (FEQME) contacts substrate. 330 to 334 (EPSLG) is a substrate binding site.

It belongs to the class-II aminoacyl-tRNA synthetase family. As to quaternary structure, homodimer.

The protein resides in the cytoplasm. The enzyme catalyses tRNA(Gly) + glycine + ATP = glycyl-tRNA(Gly) + AMP + diphosphate. In terms of biological role, catalyzes the attachment of glycine to tRNA(Gly). The sequence is that of Glycine--tRNA ligase from Staphylococcus aureus (strain Mu50 / ATCC 700699).